The primary structure comprises 130 residues: Large-conductance mechanosensitive channel (130 aa).

2 helical membrane-spanning segments follow: residues 11-31 and 70-90; these read FALKGNVLDLAVAVVIGAAFG and GAFIQSIVDFIIIAFAIFIFV.

Belongs to the MscL family. In terms of assembly, homopentamer.

It is found in the cell membrane. In terms of biological role, channel that opens in response to stretch forces in the membrane lipid bilayer. May participate in the regulation of osmotic pressure changes within the cell. This chain is Large-conductance mechanosensitive channel, found in Listeria welshimeri serovar 6b (strain ATCC 35897 / DSM 20650 / CCUG 15529 / CIP 8149 / NCTC 11857 / SLCC 5334 / V8).